The sequence spans 183 residues: Ras-related protein Rap-2a (183 aa).

10-17 (GSGGVGKS) is a GTP binding site. Positions 32 to 40 (YDPTIEDFY) match the Effector region motif. Residues 57–61 (DTAGT) and 116–119 (NKVD) each bind GTP. Residues cysteine 176 and cysteine 177 are each lipidated (S-palmitoyl cysteine). Residue cysteine 180 is modified to Cysteine methyl ester. The S-farnesyl cysteine moiety is linked to residue cysteine 180. Residues 181–183 (NIQ) constitute a propeptide, removed in mature form.

The protein belongs to the small GTPase superfamily. Ras family. Interacts with PLCE1. Interacts with ARHGAP29, SGSM1, SGSM2 and SGSM3. Interacts (GTP-bound form preferentially) with MAP4K4. Interacts with MINK1. Interacts with cytoskeletal actin. Interacts (GTP-bound form) with RUNDC3A. Interacts (GTP-bound form preferentially) with TNIK (via the CNH domain); the interaction is direct and recruits RAP2A to the E3 ubiquitin ligase NEDD4. Interacts with RGS14; the interaction is GTP-dependent. Post-translationally, ubiquitinated; undergoes 'Lys-63' monoubiquitination and diubiquitination by NEDD4. Multiple lysine residues are probably modified. Ubiquitination requires TNIK, prevents interaction with effectors and inactivates RAP2A. Ubiquitination by the ECS(RAB40B) complex leads to RAP2A localization to lamellipodia plasma membrane, activation, and regulation of sorting at early endosomes for recycling to the lamellipodia plasma membrane. Palmitoylated. Palmitoylation is required for association with recycling endosome membranes and activation of TNIK. As to expression, expressed in granular layer of the cerebellum, forebrain, striatum, layer V of the cortex, olfactory cortex, tubercules, subthalamic and hippocampus, particularly in the CA2 region, to a lesser extent in the CA1 region and the external layer of the dentate gyrus. Expressed in neurons.

It localises to the midbody. Its subcellular location is the cell projection. It is found in the lamellipodium membrane. The protein resides in the golgi apparatus. The protein localises to the recycling endosome membrane. It localises to the lysosome. It catalyses the reaction GTP + H2O = GDP + phosphate + H(+). With respect to regulation, activated by the guanine nucleotide-exchange factors RAPGEF3 and RAPGEF4 in a cAMP-dependent manner. Nucleotide exchange is also specifically stimulated by RAPGEF5, RASGEF1A and RASGEF1B. Functionally, small GTP-binding protein which cycles between a GDP-bound inactive and a GTP-bound active form. In its active form interacts with and regulates several effectors including MAP4K4, MINK1 and TNIK. Part of a signaling complex composed of NEDD4, RAP2A and TNIK which regulates neuronal dendrite extension and arborization during development. More generally, it is part of several signaling cascades and may regulate cytoskeletal rearrangements, cell migration, cell adhesion and cell spreading. This Mus musculus (Mouse) protein is Ras-related protein Rap-2a.